The sequence spans 429 residues: Probable M18 family aminopeptidase 2 (429 aa).

Zn(2+) is bound by residues histidine 82, histidine 156, and histidine 401.

It belongs to the peptidase M18 family. Requires Zn(2+) as cofactor.

The chain is Probable M18 family aminopeptidase 2 from Pseudomonas putida (strain GB-1).